A 415-amino-acid polypeptide reads, in one-letter code: SNF1 protein kinase subunit beta-2 (415 aa).

Disordered regions lie at residues 1-43 (MGTT…EMDA), 55-158 (KCSD…PSEI), and 249-276 (EKNP…SSIA). Gly-2 is lipidated: N-myristoyl glycine. Positions 9–19 (AQKKQTTKKCR) are enriched in basic residues. Positions 55 to 69 (KCSDSQDAGQPSREG) are enriched in polar residues. Phosphoserine is present on Ser-66. Basic and acidic residues-rich tracts occupy residues 122-150 (PKQD…RAKE) and 249-264 (EKNP…EADS). Residues 154–335 (GPSEIKSSLM…LDRQQSNTDT (182 aa)) form a kinase-interacting sequence (KIS); required for interaction with SNF1 region. The residue at position 298 (Ser-298) is a Phosphoserine. Residues 336–415 (SWLTPPQLPP…QILYTPIESS (80 aa)) are association with SNF1 kinase complex (ASC) domain; required for interaction with SNF4.

The protein belongs to the 5'-AMP-activated protein kinase beta subunit family. In terms of assembly, component of the SNF1 kinase complex, a heterotrimeric complex composed of the catalytic alpha subunit SNF1, one of the three related beta subunits SIP1, SIP2 or GAL83, and the regulatory gamma subunit SNF4. The beta subunit serves as a bridge between the catalytic and the regulatory subunit. Interacts (via KIS domain) with SNF1. Interacts (via ASC domain) with SNF4. Post-translationally, phosphorylated by SNF1 in vitro.

The protein localises to the cytoplasm. It localises to the cell membrane. Functionally, beta subunit of the SNF1 kinase complex, which is required for transcriptional, metabolic, and developmental adaptations in response to glucose limitation. Has a structural role, mediating heterotrimer formation, and a regulatory role, defining carbon source-regulated subcellular location and substrate specificity of the SNF1 kinase complex. Involved in the regulation of aging. Acts as a negative regulator of nuclear SNF1 activity in young cells by sequestering its activating gamma subunit at the plasma membrane. The chain is SNF1 protein kinase subunit beta-2 (SIP2) from Saccharomyces cerevisiae (strain ATCC 204508 / S288c) (Baker's yeast).